A 160-amino-acid chain; its full sequence is Cytochrome b6-f complex subunit 4 (160 aa).

3 helical membrane-spanning segments follow: residues 36 to 56 (LLYIFPVVILGTIACNVGLAV), 95 to 115 (LLGVLLMVSVPTGLLTVPFLE), and 131 to 151 (TVFLFGTALSLWLGIGATLPI).

Belongs to the cytochrome b family. PetD subfamily. In terms of assembly, the 4 large subunits of the cytochrome b6-f complex are cytochrome b6, subunit IV (17 kDa polypeptide, petD), cytochrome f and the Rieske protein, while the 4 small subunits are petG, petL, petM and petN. The complex functions as a dimer.

It localises to the plastid. It is found in the chloroplast thylakoid membrane. Component of the cytochrome b6-f complex, which mediates electron transfer between photosystem II (PSII) and photosystem I (PSI), cyclic electron flow around PSI, and state transitions. This Amborella trichopoda protein is Cytochrome b6-f complex subunit 4.